We begin with the raw amino-acid sequence, 265 residues long: Undecaprenyl-diphosphatase (265 aa).

8 helical membrane passes run 1–21 (MDFI…FLPI), 39–61 (QGLA…YFRL), 85–105 (LAWA…MLTE), 115–135 (LIIA…DWAG), 149–169 (ILFI…RSGI), 187–207 (FSFL…ALDL), 218–238 (ALAL…HYFF), and 244–264 (IGML…FYLF).

Belongs to the UppP family.

The protein resides in the cell inner membrane. It catalyses the reaction di-trans,octa-cis-undecaprenyl diphosphate + H2O = di-trans,octa-cis-undecaprenyl phosphate + phosphate + H(+). In terms of biological role, catalyzes the dephosphorylation of undecaprenyl diphosphate (UPP). Confers resistance to bacitracin. The chain is Undecaprenyl-diphosphatase from Nitrosococcus oceani (strain ATCC 19707 / BCRC 17464 / JCM 30415 / NCIMB 11848 / C-107).